The sequence spans 257 residues: Phycoerythrobilin:ferredoxin oxidoreductase (257 aa).

It belongs to the HY2 family.

It carries out the reaction (3Z)-phycoerythrobilin + oxidized 2[4Fe-4S]-[ferredoxin] = 15,16-dihydrobiliverdin + reduced 2[4Fe-4S]-[ferredoxin] + 2 H(+). Its function is as follows. Catalyzes the two-electron reduction of the C2 and C3(1) diene system of 15,16-dihydrobiliverdin. This is Phycoerythrobilin:ferredoxin oxidoreductase from Synechococcus sp. (strain CC9902).